The primary structure comprises 364 residues: Methylthioribose-1-phosphate isomerase (364 aa).

Residue aspartate 254 is the Proton donor of the active site.

The protein belongs to the eIF-2B alpha/beta/delta subunits family. MtnA subfamily.

It is found in the cytoplasm. The protein resides in the nucleus. The catalysed reaction is 5-(methylsulfanyl)-alpha-D-ribose 1-phosphate = 5-(methylsulfanyl)-D-ribulose 1-phosphate. It functions in the pathway amino-acid biosynthesis; L-methionine biosynthesis via salvage pathway; L-methionine from S-methyl-5-thio-alpha-D-ribose 1-phosphate: step 1/6. Its function is as follows. Catalyzes the interconversion of methylthioribose-1-phosphate (MTR-1-P) into methylthioribulose-1-phosphate (MTRu-1-P). The protein is Methylthioribose-1-phosphate isomerase of Drosophila ananassae (Fruit fly).